The primary structure comprises 287 residues: uncharacterized protein (287 aa).

Transmembrane regions (helical) follow at residues 7-28, 32-54, 67-86, 91-113, 120-139, 144-163, 170-192, 202-224, 231-253, and 263-280; these read LLLT…RAAL, AIDA…AVLL, GWRG…YAYV, GTGA…LLRG, ALLG…LPGA, LGGA…YTLL, PLAV…LLAF, GLAY…WYSA, IQGA…LLLG, and ATLA…PRLG. 2 consecutive EamA domains span residues 15–136 and 155–276; these read LAFA…FLLL and LAWG…LILA.

Its subcellular location is the cell membrane. This is an uncharacterized protein from Pseudomonas aeruginosa (strain ATCC 15692 / DSM 22644 / CIP 104116 / JCM 14847 / LMG 12228 / 1C / PRS 101 / PAO1).